The following is a 276-amino-acid chain: NAD-capped RNA hydrolase NudC (276 aa).

Substrate is bound at residue arginine 82. Zn(2+) is bound by residues cysteine 112 and cysteine 115. Glutamate 125 provides a ligand contact to substrate. Residues cysteine 130 and cysteine 133 each coordinate Zn(2+). A substrate-binding site is contributed by tyrosine 138. One can recognise a Nudix hydrolase domain in the interval 139–262; the sequence is PRISPSMIVL…SIARYLIDLY (124 aa). Residues alanine 172, glutamate 188, and glutamate 192 each contribute to the a divalent metal cation site. The Nudix box motif lies at 173-194; the sequence is GFAEPGESAEDCLVREVREEVA. 206–213 is a substrate binding site; sequence QCWPFPHS. Glutamate 233 is an a divalent metal cation binding site. Position 255 (alanine 255) interacts with substrate.

The protein belongs to the Nudix hydrolase family. NudC subfamily. Homodimer. It depends on Mg(2+) as a cofactor. Mn(2+) serves as cofactor. Zn(2+) is required as a cofactor.

The enzyme catalyses a 5'-end NAD(+)-phospho-ribonucleoside in mRNA + H2O = a 5'-end phospho-adenosine-phospho-ribonucleoside in mRNA + beta-nicotinamide D-ribonucleotide + 2 H(+). The catalysed reaction is NAD(+) + H2O = beta-nicotinamide D-ribonucleotide + AMP + 2 H(+). It carries out the reaction NADH + H2O = reduced beta-nicotinamide D-ribonucleotide + AMP + 2 H(+). Functionally, mRNA decapping enzyme that specifically removes the nicotinamide adenine dinucleotide (NAD) cap from a subset of mRNAs by hydrolyzing the diphosphate linkage to produce nicotinamide mononucleotide (NMN) and 5' monophosphate mRNA. The NAD-cap is present at the 5'-end of some mRNAs and stabilizes RNA against 5'-processing. Has preference for mRNAs with a 5'-end purine. Catalyzes the hydrolysis of a broad range of dinucleotide pyrophosphates. This is NAD-capped RNA hydrolase NudC from Pseudomonas putida (strain ATCC 700007 / DSM 6899 / JCM 31910 / BCRC 17059 / LMG 24140 / F1).